Here is a 199-residue protein sequence, read N- to C-terminus: V-type ATP synthase subunit E (199 aa).

This sequence belongs to the V-ATPase E subunit family.

Produces ATP from ADP in the presence of a proton gradient across the membrane. This is V-type ATP synthase subunit E from Borrelia garinii subsp. bavariensis (strain ATCC BAA-2496 / DSM 23469 / PBi) (Borreliella bavariensis).